We begin with the raw amino-acid sequence, 375 residues long: Alanine racemase, catabolic (375 aa).

Lysine 38 serves as the catalytic Proton acceptor; specific for D-alanine. Residue lysine 38 is modified to N6-(pyridoxal phosphate)lysine. Tyrosine 269 acts as the Proton acceptor; specific for L-alanine in catalysis.

It belongs to the alanine racemase family. Requires pyridoxal 5'-phosphate as cofactor.

It carries out the reaction L-alanine = D-alanine. Its pathway is amino-acid biosynthesis; D-alanine biosynthesis; D-alanine from L-alanine: step 1/1. This is Alanine racemase, catabolic (alr1) from Schizosaccharomyces pombe (strain 972 / ATCC 24843) (Fission yeast).